A 73-amino-acid chain; its full sequence is Neutrophil elastase 2B (73 aa).

The region spanning 1 to 73 is the Peptidase S1 domain; the sequence is IVGGRPARPH…SGGPLVCNGL (73 aa). The Charge relay system role is filled by Ser64.

This sequence belongs to the peptidase S1 family. Elastase subfamily.

Its function is as follows. May be involved in the degradation of connective tissue in chronic lung disease. The chain is Neutrophil elastase 2B from Equus caballus (Horse).